Consider the following 397-residue polypeptide: MIIKPRVRGFICVTTHPAGCAASVREQIAYVARRGPIERGPKKVLVIGASTGYGLAARIAAAFGAGAATLGVFFERAPADAKPGTAGWYNSAAFHDEAAARGLQATSVNGDAFSDEIKHKTIDAIRRDLGQVDLVVYSVAAPRRTHPKTGVTHQSTLKPIGHAVRLRGIDTDNEAIKETLLQPATPDEIADTVAVMGGEDWRMWIDALDAAGVLADGAKTTAFTYLGEQVTHDIYWNGSIGEAKKDLDRTVLALRGKLAARGGDARVSVLKAVVTQASSAIPMMPLYLSLLFKVMKARGTHEGCIEQVDGLLRDSLYGAQPHVDAEGRLRADRLELDPAVQARVLELWDQVTDDNLYPLTDFAGYKAEFLRLFGFGIDGVDYDAPVEPNVRIPNLIE.

NAD(+) contacts are provided by residues 48–53 (GASTGY), 74–75 (FE), 111–112 (DA), and 139–140 (VA). Tyrosine 225 serves as a coordination point for substrate. The Proton donor role is filled by tyrosine 235. NAD(+)-binding positions include lysine 244 and 273–275 (VVT).

Belongs to the TER reductase family. In terms of assembly, monomer.

It catalyses the reaction a 2,3-saturated acyl-[ACP] + NAD(+) = a (2E)-enoyl-[ACP] + NADH + H(+). It functions in the pathway lipid metabolism; fatty acid biosynthesis. Involved in the final reduction of the elongation cycle of fatty acid synthesis (FAS II). Catalyzes the reduction of a carbon-carbon double bond in an enoyl moiety that is covalently linked to an acyl carrier protein (ACP). The polypeptide is Enoyl-[acyl-carrier-protein] reductase [NADH] (Burkholderia pseudomallei (strain 1106a)).